The chain runs to 208 residues: Crossover junction endodeoxyribonuclease RuvC (208 aa).

Catalysis depends on residues Asp-9, Glu-70, and Asp-143. Residues Asp-9, Glu-70, and Asp-143 each coordinate Mg(2+).

This sequence belongs to the RuvC family. In terms of assembly, homodimer which binds Holliday junction (HJ) DNA. The HJ becomes 2-fold symmetrical on binding to RuvC with unstacked arms; it has a different conformation from HJ DNA in complex with RuvA. In the full resolvosome a probable DNA-RuvA(4)-RuvB(12)-RuvC(2) complex forms which resolves the HJ. Requires Mg(2+) as cofactor.

The protein localises to the cytoplasm. The enzyme catalyses Endonucleolytic cleavage at a junction such as a reciprocal single-stranded crossover between two homologous DNA duplexes (Holliday junction).. In terms of biological role, the RuvA-RuvB-RuvC complex processes Holliday junction (HJ) DNA during genetic recombination and DNA repair. Endonuclease that resolves HJ intermediates. Cleaves cruciform DNA by making single-stranded nicks across the HJ at symmetrical positions within the homologous arms, yielding a 5'-phosphate and a 3'-hydroxyl group; requires a central core of homology in the junction. The consensus cleavage sequence is 5'-(A/T)TT(C/G)-3'. Cleavage occurs on the 3'-side of the TT dinucleotide at the point of strand exchange. HJ branch migration catalyzed by RuvA-RuvB allows RuvC to scan DNA until it finds its consensus sequence, where it cleaves and resolves the cruciform DNA. This is Crossover junction endodeoxyribonuclease RuvC from Leifsonia xyli subsp. xyli (strain CTCB07).